Consider the following 256-residue polypeptide: Ribonuclease 3 (256 aa).

The RNase III domain occupies 3-125 (LEALQQRLGY…IFGAVFLDGG (123 aa)). Mg(2+) is bound at residue glutamate 38. The active site involves aspartate 42. Mg(2+) contacts are provided by aspartate 111 and glutamate 114. The active site involves glutamate 114. A DRBM domain is found at 152 to 222 (DAKTLLQEYL…AKLALEEAHR (71 aa)). Positions 227-256 (LVKRSRAERTGKTRKQATPPDPQLSLRLKE) are disordered.

Belongs to the ribonuclease III family. In terms of assembly, homodimer. Mg(2+) is required as a cofactor.

The protein localises to the cytoplasm. It catalyses the reaction Endonucleolytic cleavage to 5'-phosphomonoester.. Functionally, digests double-stranded RNA. Involved in the processing of primary rRNA transcript to yield the immediate precursors to the large and small rRNAs (23S and 16S). Processes some mRNAs, and tRNAs when they are encoded in the rRNA operon. Processes pre-crRNA and tracrRNA of type II CRISPR loci if present in the organism. This is Ribonuclease 3 from Ralstonia nicotianae (strain ATCC BAA-1114 / GMI1000) (Ralstonia solanacearum).